Here is a 237-residue protein sequence, read N- to C-terminus: Uridylate kinase (237 aa).

10-13 contacts ATP; the sequence is KFSG. The involved in allosteric activation by GTP stretch occupies residues 18 to 23; sequence GDSGFG. Residue G52 coordinates UMP. ATP contacts are provided by G53 and R57. UMP contacts are provided by residues D73 and 134 to 141; that span reads TGNPFFTT. 3 residues coordinate ATP: T161, Y167, and D170.

It belongs to the UMP kinase family. Homohexamer.

The protein localises to the cytoplasm. The catalysed reaction is UMP + ATP = UDP + ADP. It participates in pyrimidine metabolism; CTP biosynthesis via de novo pathway; UDP from UMP (UMPK route): step 1/1. Its activity is regulated as follows. Allosterically activated by GTP. Inhibited by UTP. Its function is as follows. Catalyzes the reversible phosphorylation of UMP to UDP. In Campylobacter hominis (strain ATCC BAA-381 / DSM 21671 / CCUG 45161 / LMG 19568 / NCTC 13146 / CH001A), this protein is Uridylate kinase.